The sequence spans 679 residues: Protein hook (679 aa).

Residues 6–123 form the Calponin-homology (CH) domain; sequence NEMYYSLLEW…RLLQLVLGCA (118 aa). Coiled coils occupy residues 135–437 and 480–574; these read EIMC…LKCG and QTAL…QEIL.

This sequence belongs to the hook family. Homodimer. Interacts with microtubules via its N-terminus.

It is found in the cytoplasm. The protein localises to the cytoskeleton. The protein resides in the endosome. It localises to the synapse. Involved in endocytic trafficking by stabilizing organelles of the endocytic pathway. Probably acts as a cytoskeletal linker protein required to tether endosome vesicles to the cytoskeleton. Involved in modulation of endocytosis at stages required for down-regulation of membrane proteins that control synapse size. Not involved in synaptic vesicle recycling. Required in R7 cells for boss endocytosis into multivesicular bodies (MVBs). Has a role in regulating adult longevity. The chain is Protein hook from Drosophila simulans (Fruit fly).